A 123-amino-acid polypeptide reads, in one-letter code: Ribosome-binding factor A (123 aa).

It belongs to the RbfA family. In terms of assembly, monomer. Binds 30S ribosomal subunits, but not 50S ribosomal subunits or 70S ribosomes.

Its subcellular location is the cytoplasm. Its function is as follows. One of several proteins that assist in the late maturation steps of the functional core of the 30S ribosomal subunit. Associates with free 30S ribosomal subunits (but not with 30S subunits that are part of 70S ribosomes or polysomes). Required for efficient processing of 16S rRNA. May interact with the 5'-terminal helix region of 16S rRNA. The polypeptide is Ribosome-binding factor A (Magnetococcus marinus (strain ATCC BAA-1437 / JCM 17883 / MC-1)).